The following is a 53-amino-acid chain: Tryptophan RNA-binding attenuator protein inhibitory protein (53 aa).

CXXCXGXG motif repeat units lie at residues 12 to 19 (CPKCERAG) and 26 to 33 (CPACSGKG).

In terms of assembly, homopentamer or homohexamer.

The protein localises to the cytoplasm. By forming a complex with tryptophan-activated TRAP, and masking its RNA binding site, it inhibits TRAP's RNA binding ability, thereby abolishing TRAP regulation of gene expression, leading to antitermination and increased trp operon expression. AT acts by competing with messenger RNA for the RNA binding domain of TRAP. This Bacillus subtilis (strain 168) protein is Tryptophan RNA-binding attenuator protein inhibitory protein (rtpA).